We begin with the raw amino-acid sequence, 271 residues long: Urease accessory protein UreD (271 aa).

This sequence belongs to the UreD family. UreD, UreF and UreG form a complex that acts as a GTP-hydrolysis-dependent molecular chaperone, activating the urease apoprotein by helping to assemble the nickel containing metallocenter of UreC. The UreE protein probably delivers the nickel.

Its subcellular location is the cytoplasm. In terms of biological role, required for maturation of urease via the functional incorporation of the urease nickel metallocenter. This chain is Urease accessory protein UreD, found in Mycolicibacterium smegmatis (strain ATCC 700084 / mc(2)155) (Mycobacterium smegmatis).